The primary structure comprises 482 residues: tRNA sulfurtransferase (482 aa).

Residues 61–165 (QQVLEILTTT…DDKLNQILAH (105 aa)) form the THUMP domain. Residues 183-184 (LI), K265, G287, and Q296 each bind ATP. An intrachain disulfide couples C344 to C456. Positions 404-482 (IEEHAVVLDI…GFNNVKVYRP (79 aa)) constitute a Rhodanese domain. C456 (cysteine persulfide intermediate) is an active-site residue.

The protein belongs to the ThiI family.

Its subcellular location is the cytoplasm. The catalysed reaction is [ThiI sulfur-carrier protein]-S-sulfanyl-L-cysteine + a uridine in tRNA + 2 reduced [2Fe-2S]-[ferredoxin] + ATP + H(+) = [ThiI sulfur-carrier protein]-L-cysteine + a 4-thiouridine in tRNA + 2 oxidized [2Fe-2S]-[ferredoxin] + AMP + diphosphate. It carries out the reaction [ThiS sulfur-carrier protein]-C-terminal Gly-Gly-AMP + S-sulfanyl-L-cysteinyl-[cysteine desulfurase] + AH2 = [ThiS sulfur-carrier protein]-C-terminal-Gly-aminoethanethioate + L-cysteinyl-[cysteine desulfurase] + A + AMP + 2 H(+). It participates in cofactor biosynthesis; thiamine diphosphate biosynthesis. Its function is as follows. Catalyzes the ATP-dependent transfer of a sulfur to tRNA to produce 4-thiouridine in position 8 of tRNAs, which functions as a near-UV photosensor. Also catalyzes the transfer of sulfur to the sulfur carrier protein ThiS, forming ThiS-thiocarboxylate. This is a step in the synthesis of thiazole, in the thiamine biosynthesis pathway. The sulfur is donated as persulfide by IscS. The protein is tRNA sulfurtransferase of Vibrio vulnificus (strain YJ016).